Reading from the N-terminus, the 146-residue chain is Hemoglobin subunit delta (146 aa).

The region spanning 2-146 (HLTGEEKSAV…VATALAHKYH (145 aa)) is the Globin domain. Serine 50 carries the phosphoserine modification. Heme b-binding residues include histidine 63 and histidine 92.

It belongs to the globin family. Heterotetramer of two delta chains and two alpha chains. In terms of tissue distribution, red blood cells.

This is Hemoglobin subunit delta (HBD) from Leontocebus nigricollis (Black-mantled tamarin).